Here is a 214-residue protein sequence, read N- to C-terminus: Putative ankyrin repeat protein R844 (214 aa).

5 ANK repeats span residues 41–70 (VEKN…QNKF), 81–110 (SLDK…NVKT), 111–140 (DNNM…DVRA), 142–170 (NDCA…DVTS), and 172–200 (NNFA…DIRA).

The protein is Putative ankyrin repeat protein R844 of Acanthamoeba polyphaga mimivirus (APMV).